Reading from the N-terminus, the 301-residue chain is Sulfate adenylyltransferase subunit 2 (301 aa).

The protein belongs to the PAPS reductase family. CysD subfamily. In terms of assembly, heterodimer composed of CysD, the smaller subunit, and CysN.

It carries out the reaction sulfate + ATP + H(+) = adenosine 5'-phosphosulfate + diphosphate. It participates in sulfur metabolism; hydrogen sulfide biosynthesis; sulfite from sulfate: step 1/3. Functionally, with CysN forms the ATP sulfurylase (ATPS) that catalyzes the adenylation of sulfate producing adenosine 5'-phosphosulfate (APS) and diphosphate, the first enzymatic step in sulfur assimilation pathway. APS synthesis involves the formation of a high-energy phosphoric-sulfuric acid anhydride bond driven by GTP hydrolysis by CysN coupled to ATP hydrolysis by CysD. The polypeptide is Sulfate adenylyltransferase subunit 2 (Trichlorobacter lovleyi (strain ATCC BAA-1151 / DSM 17278 / SZ) (Geobacter lovleyi)).